The chain runs to 636 residues: 1,4-alpha-glucan branching enzyme GlgB (636 aa).

Asp309 functions as the Nucleophile in the catalytic mechanism. Glu362 functions as the Proton donor in the catalytic mechanism.

This sequence belongs to the glycosyl hydrolase 13 family. GlgB subfamily. As to quaternary structure, monomer.

It carries out the reaction Transfers a segment of a (1-&gt;4)-alpha-D-glucan chain to a primary hydroxy group in a similar glucan chain.. It functions in the pathway glycan biosynthesis; glycogen biosynthesis. Its function is as follows. Catalyzes the formation of the alpha-1,6-glucosidic linkages in glycogen by scission of a 1,4-alpha-linked oligosaccharide from growing alpha-1,4-glucan chains and the subsequent attachment of the oligosaccharide to the alpha-1,6 position. The protein is 1,4-alpha-glucan branching enzyme GlgB of Aromatoleum aromaticum (strain DSM 19018 / LMG 30748 / EbN1) (Azoarcus sp. (strain EbN1)).